Consider the following 2036-residue polypeptide: Proline-rich protein 12 (2036 aa).

Disordered regions lie at residues 210-283 (GGGV…RALP), 331-587 (CSPL…GAPG), and 649-697 (APSP…DPQR). Pro residues predominate over residues 223-240 (QTPPYRPGPPDPPPPPRH). Low complexity predominate over residues 249-258 (ASSSAAAAAA). Phosphoserine is present on residues serine 332 and serine 340. Low complexity predominate over residues 340–365 (SPGAGEPSKAGPSGATAGASGRATGP). 2 stretches are compositionally biased toward gly residues: residues 367-380 (AAGG…GGGY) and 391-400 (TGKGGYGAAA). Composition is skewed to low complexity over residues 411 to 432 (STAT…TGKA) and 441 to 458 (QAYS…QAYG). The segment covering 479–490 (PPQPPSGPPPPG) has biased composition (pro residues). 2 stretches are compositionally biased toward polar residues: residues 493 to 504 (TCQSYSPDQLQG) and 523 to 537 (GLPT…STGH). Residues 543 to 558 (GHGGGWGPSSLGGGGE) are compositionally biased toward gly residues. Serine 651 is modified (phosphoserine). Over residues 673–683 (GLGGSGGAGGP) the composition is skewed to gly residues. Threonine 738 bears the Phosphothreonine mark. 4 disordered regions span residues 758–850 (AFLQ…PLQL), 859–878 (LEPA…DPPG), 886–925 (ALEP…KAPR), and 952–1068 (EMFG…CSTK). The span at 802 to 817 (LPSVLSHAPSPSPSAS) shows a compositional bias: low complexity. Residues 833 to 847 (PQPPPPPPPPPPPMP) show a composition bias toward pro residues. Residue serine 865 is modified to Phosphoserine. Residues 1037–1052 (AAPPPPPPPPPPPAPA) show a composition bias toward pro residues. Phosphoserine occurs at positions 1077 and 1135. Disordered stretches follow at residues 1120–1260 (RLPD…SLTR), 1294–1347 (RHPP…GGAL), 1376–1573 (TLPS…GEGI), and 1668–1840 (HRPP…PGRL). Positions 1182–1194 (PTTAGPASASTPT) are enriched in low complexity. A compositionally biased stretch (basic residues) spans 1199–1208 (KPRGRGRGRG). The span at 1209–1223 (RKAEEAGGTRLEPLK) shows a compositional bias: basic and acidic residues. The residue at position 1223 (lysine 1223) is an N6-acetyllysine. Over residues 1239 to 1257 (GTSSGDAISGTDHNSLDSS) the composition is skewed to polar residues. Threonine 1304 bears the Phosphothreonine mark. Composition is skewed to pro residues over residues 1306 to 1317 (PLSPPKSVPPSV) and 1324 to 1338 (PQPP…PPPS). The residue at position 1308 (serine 1308) is a Phosphoserine. Serine 1381, serine 1382, and serine 1387 each carry phosphoserine. Pro residues-rich tracts occupy residues 1420-1438 (DGPP…PLPG) and 1458-1535 (PPTP…APSP). The span at 1541 to 1553 (PDTRPLHLAKKQE) shows a compositional bias: basic and acidic residues. Position 1561 is a phosphothreonine (threonine 1561). At serine 1568 the chain carries Phosphoserine. The segment covering 1691-1703 (APPPKAPAPPPKP) has biased composition (pro residues). Basic and acidic residues-rich tracts occupy residues 1704-1715 (ETPEKTTSEKPP) and 1737-1769 (PVEK…RPER). Phosphothreonine is present on threonine 1705. The segment covering 1817-1829 (GSSSDSESSPGAP) has biased composition (low complexity). Serine 1925 bears the Phosphoserine mark.

The protein resides in the nucleus. It is found in the postsynaptic density. The protein localises to the synapse. It localises to the synaptosome. This is Proline-rich protein 12 from Homo sapiens (Human).